A 348-amino-acid chain; its full sequence is Anthranilate phosphoribosyltransferase (348 aa).

5-phospho-alpha-D-ribose 1-diphosphate contacts are provided by residues Gly-81, 84-85 (GD), Thr-89, 91-94 (NIST), 109-117 (KHGNRSSSG), and Ser-121. Gly-81 is a binding site for anthranilate. Residue Ser-93 participates in Mg(2+) binding. Asn-112 is an anthranilate binding site. Position 167 (Arg-167) interacts with anthranilate. Mg(2+)-binding residues include Asp-226 and Glu-227.

This sequence belongs to the anthranilate phosphoribosyltransferase family. As to quaternary structure, homodimer. It depends on Mg(2+) as a cofactor.

The catalysed reaction is N-(5-phospho-beta-D-ribosyl)anthranilate + diphosphate = 5-phospho-alpha-D-ribose 1-diphosphate + anthranilate. The protein operates within amino-acid biosynthesis; L-tryptophan biosynthesis; L-tryptophan from chorismate: step 2/5. Catalyzes the transfer of the phosphoribosyl group of 5-phosphorylribose-1-pyrophosphate (PRPP) to anthranilate to yield N-(5'-phosphoribosyl)-anthranilate (PRA). The polypeptide is Anthranilate phosphoribosyltransferase (Nitrosopumilus maritimus (strain SCM1)).